Here is a 164-residue protein sequence, read N- to C-terminus: C-phycoerythrin alpha chain (164 aa).

(2R,3E)-phycoerythrobilin is bound by residues C82 and C139.

The protein belongs to the phycobiliprotein family. In terms of assembly, heterodimer of an alpha and a beta chain. Contains two covalently linked bilin chromophores.

The protein resides in the cellular thylakoid membrane. In terms of biological role, light-harvesting photosynthetic bile pigment-protein from the phycobiliprotein complex. In Microchaete diplosiphon (Fremyella diplosiphon), this protein is C-phycoerythrin alpha chain (cpeA).